The following is a 313-amino-acid chain: Methionyl-tRNA formyltransferase (313 aa).

111–114 (SLLP) provides a ligand contact to (6S)-5,6,7,8-tetrahydrofolate.

This sequence belongs to the Fmt family.

It carries out the reaction L-methionyl-tRNA(fMet) + (6R)-10-formyltetrahydrofolate = N-formyl-L-methionyl-tRNA(fMet) + (6S)-5,6,7,8-tetrahydrofolate + H(+). Attaches a formyl group to the free amino group of methionyl-tRNA(fMet). The formyl group appears to play a dual role in the initiator identity of N-formylmethionyl-tRNA by promoting its recognition by IF2 and preventing the misappropriation of this tRNA by the elongation apparatus. This chain is Methionyl-tRNA formyltransferase, found in Mesoplasma florum (strain ATCC 33453 / NBRC 100688 / NCTC 11704 / L1) (Acholeplasma florum).